Reading from the N-terminus, the 354-residue chain is Methionine import ATP-binding protein MetN (354 aa).

Residues 8–250 form the ABC transporter domain; the sequence is LDHIDITFRQ…PKEALTQEFI (243 aa). 42–49 lines the ATP pocket; that stretch reads GYSGAGKS.

Belongs to the ABC transporter superfamily. Methionine importer (TC 3.A.1.24) family. The complex is composed of two ATP-binding proteins (MetN), two transmembrane proteins (MetI) and a solute-binding protein (MetQ).

The protein localises to the cell membrane. It catalyses the reaction L-methionine(out) + ATP + H2O = L-methionine(in) + ADP + phosphate + H(+). The enzyme catalyses D-methionine(out) + ATP + H2O = D-methionine(in) + ADP + phosphate + H(+). In terms of biological role, part of the ABC transporter complex MetNIQ involved in methionine import. Responsible for energy coupling to the transport system. The protein is Methionine import ATP-binding protein MetN of Streptococcus pyogenes serotype M12 (strain MGAS2096).